The chain runs to 325 residues: Protease HtpX homolog (325 aa).

A helical transmembrane segment spans residues 20–40 (IGYLLGGGGGMMIALVIAVAM). His130 is a binding site for Zn(2+). Glu131 is a catalytic residue. His134 serves as a coordination point for Zn(2+). A run of 2 helical transmembrane segments spans residues 145 to 165 (IVATLAGAISMLGNFAFFLGG) and 173 to 193 (VMGVVGTLLAMIVAPFGAMIV). Residue Glu202 coordinates Zn(2+). A disordered region spans residues 288–325 (AMTARAAAPSQNSGPWGQRSDNAGGNSNGGSRYRGPWS). Over residues 306-325 (RSDNAGGNSNGGSRYRGPWS) the composition is skewed to low complexity.

This sequence belongs to the peptidase M48B family. Requires Zn(2+) as cofactor.

Its subcellular location is the cell inner membrane. In Brucella abortus (strain S19), this protein is Protease HtpX homolog.